The primary structure comprises 362 residues: Ferrochelatase (362 aa).

2 residues coordinate Fe cation: His212 and Glu294.

This sequence belongs to the ferrochelatase family.

The protein localises to the cytoplasm. The enzyme catalyses heme b + 2 H(+) = protoporphyrin IX + Fe(2+). It participates in porphyrin-containing compound metabolism; protoheme biosynthesis; protoheme from protoporphyrin-IX: step 1/1. Catalyzes the ferrous insertion into protoporphyrin IX. The polypeptide is Ferrochelatase (Leptospira biflexa).